The sequence spans 76 residues: ATP synthase peripheral stalk subunit F6, mitochondrial (76 aa).

An N6-acetyllysine mark is found at lysine 9, lysine 14, and lysine 47. Lysine 52 and lysine 67 each carry N6-acetyllysine; alternate. Lysine 52 and lysine 67 each carry N6-succinyllysine; alternate. Lysine 73 is subject to N6-acetyllysine. Serine 76 bears the Phosphoserine mark.

Belongs to the eukaryotic ATPase subunit F6 family. In terms of assembly, component of the ATP synthase complex composed at least of ATP5F1A/subunit alpha, ATP5F1B/subunit beta, ATP5MC1/subunit c (homooctomer), MT-ATP6/subunit a, MT-ATP8/subunit 8, ATP5ME/subunit e, ATP5MF/subunit f, ATP5MG/subunit g, ATP5MK/subunit k, ATP5MJ/subunit j, ATP5F1C/subunit gamma, ATP5F1D/subunit delta, ATP5F1E/subunit epsilon, ATP5PF/subunit F6, ATP5PB/subunit b, ATP5PD/subunit d, ATP5PO/subunit OSCP. ATP synthase complex consists of a soluble F(1) head domain (subunits alpha(3) and beta(3)) - the catalytic core - and a membrane F(0) domain - the membrane proton channel (subunits c, a, 8, e, f, g, k and j). These two domains are linked by a central stalk (subunits gamma, delta, and epsilon) rotating inside the F1 region and a stationary peripheral stalk (subunits F6, b, d, and OSCP).

The protein resides in the mitochondrion. It is found in the mitochondrion inner membrane. In terms of biological role, subunit F6, of the mitochondrial membrane ATP synthase complex (F(1)F(0) ATP synthase or Complex V) that produces ATP from ADP in the presence of a proton gradient across the membrane which is generated by electron transport complexes of the respiratory chain. ATP synthase complex consist of a soluble F(1) head domain - the catalytic core - and a membrane F(1) domain - the membrane proton channel. These two domains are linked by a central stalk rotating inside the F(1) region and a stationary peripheral stalk. During catalysis, ATP synthesis in the catalytic domain of F(1) is coupled via a rotary mechanism of the central stalk subunits to proton translocation. In vivo, can only synthesize ATP although its ATP hydrolase activity can be activated artificially in vitro. Part of the complex F(0) domain. Part of the complex F(0) domain and the peripheric stalk, which acts as a stator to hold the catalytic alpha(3)beta(3) subcomplex and subunit a/ATP6 static relative to the rotary elements. The polypeptide is ATP synthase peripheral stalk subunit F6, mitochondrial (Sus scrofa (Pig)).